The primary structure comprises 196 residues: Glycerol-3-phosphate acyltransferase (196 aa).

The next 5 membrane-spanning stretches (helical) occupy residues 2–22 (GWWL…SYLI), 51–71 (VVGG…VFIA), 80–100 (LVSL…FMKF), 112–132 (IIFC…LVIV), and 137–156 (YASL…GYLF).

Belongs to the PlsY family. As to quaternary structure, probably interacts with PlsX.

The protein resides in the cell inner membrane. It catalyses the reaction an acyl phosphate + sn-glycerol 3-phosphate = a 1-acyl-sn-glycero-3-phosphate + phosphate. It participates in lipid metabolism; phospholipid metabolism. In terms of biological role, catalyzes the transfer of an acyl group from acyl-phosphate (acyl-PO(4)) to glycerol-3-phosphate (G3P) to form lysophosphatidic acid (LPA). This enzyme utilizes acyl-phosphate as fatty acyl donor, but not acyl-CoA or acyl-ACP. The sequence is that of Glycerol-3-phosphate acyltransferase from Thermotoga petrophila (strain ATCC BAA-488 / DSM 13995 / JCM 10881 / RKU-1).